An 873-amino-acid chain; its full sequence is Zinc fingers and homeoboxes protein 1 (873 aa).

The segment at 24–63 (LISDLDEGPPVLTPVENTRAESISSDEEVHESVDSDNQQN) is disordered. A Phosphothreonine modification is found at Thr-36. A phosphoserine mark is found at Ser-45, Ser-47, and Ser-48. 2 consecutive C2H2-type zinc fingers follow at residues 70-93 (YECK…DSEH) and 102-125 (YVCV…LKYH). Lys-159 participates in a covalent cross-link: Glycyl lysine isopeptide (Lys-Gly) (interchain with G-Cter in SUMO2). Phosphoserine is present on Ser-202. The tract at residues 202–236 (SVEDVPEEKENEIKPDREEIVENPSSSASESNTST) is disordered. Positions 212–221 (NEIKPDREEI) are enriched in basic and acidic residues. Over residues 223–236 (ENPSSSASESNTST) the composition is skewed to low complexity. Residues 272–432 (NSNLIPKVLI…QNNIQKSQVP (161 aa)) form a required for dimerization region. A required for interaction with NFYA region spans residues 272-564 (NSNLIPKVLI…AQPKQSWNPF (293 aa)). The homeobox 1 DNA-binding region spans 284-346 (NSIPTYNAAL…LKHGVSWTPE (63 aa)). Residues Lys-441, Lys-454, Lys-485, and Lys-629 each participate in a glycyl lysine isopeptide (Lys-Gly) (interchain with G-Cter in SUMO2) cross-link. 2 DNA-binding regions (homeobox) span residues 464-526 (SFGI…KSNQ) and 569-630 (PQKF…EEKM). 2 disordered regions span residues 626-667 (KEEK…ICKK) and 732-770 (SSMN…NNWD). Position 648 is a phosphoserine (Ser-648). The segment at residues 660 to 722 (STGKICKKTP…YAWKNGNLKW (63 aa)) is a DNA-binding region (homeobox 4). The tract at residues 734–768 (MNGLSSLRKRGRGRPKGRGRGRPRGRPRGSKRINN) is required for nuclear localization. Over residues 740–764 (LRKRGRGRPKGRGRGRPRGRPRGSK) the composition is skewed to basic residues. Ser-774 carries the phosphoserine modification. Residues 777 to 832 (KFKTGTAILKDYYLKHKFLNEQDLDELVNKSHMGYEQVREWFAERQRRSELGIELF) constitute a DNA-binding region (homeobox 5). Residues 829–873 (IELFEENEEEDEVIDDQEEDEEETDDSDTWEPPRHVKRKLSKSDD) form a disordered region. Positions 831–857 (LFEENEEEDEVIDDQEEDEEETDDSDT) are enriched in acidic residues. Positions 831–873 (LFEENEEEDEVIDDQEEDEEETDDSDTWEPPRHVKRKLSKSDD) are required for repressor activity. The span at 863–873 (HVKRKLSKSDD) shows a compositional bias: basic residues.

Belongs to the ZHX family. Forms homodimers. Heterodimer (via HD1 domain) with ZHX2 (via HD1 domain). Also forms a heterodimer with ZHX3 which is a prerequisite for repressor activity. Interacts with ATF7IP and NFYA. Interacts (via homeobox domains) with DNMT3B (via PWWP domain). As to expression, ubiquitously expressed. Expressed in podocytes.

It localises to the nucleus. Acts as a transcriptional repressor. Increases DNMT3B-mediated repressive transcriptional activity when DNMT3B is tethered to DNA. May link molecule between DNMT3B and other co-repressor proteins. This is Zinc fingers and homeoboxes protein 1 (ZHX1) from Homo sapiens (Human).